The sequence spans 253 residues: Phosphate import ATP-binding protein PstB 1 (253 aa).

In terms of domain architecture, ABC transporter spans 7–248 (LQIRDLSVYY…PKRKETEDYI (242 aa)). 39 to 46 (GPSGSGKS) lines the ATP pocket.

Belongs to the ABC transporter superfamily. Phosphate importer (TC 3.A.1.7) family. In terms of assembly, the complex is composed of two ATP-binding proteins (PstB), two transmembrane proteins (PstC and PstA) and a solute-binding protein (PstS).

It localises to the cell membrane. The catalysed reaction is phosphate(out) + ATP + H2O = ADP + 2 phosphate(in) + H(+). Its function is as follows. Part of the ABC transporter complex PstSACB involved in phosphate import. Responsible for energy coupling to the transport system. This chain is Phosphate import ATP-binding protein PstB 1, found in Streptococcus pyogenes serotype M2 (strain MGAS10270).